Consider the following 464-residue polypeptide: MAVTTTEFDTIAAISTPPGEGGISIIRLSGEEVFQVAAKLFKGADLTQVGSHTIHYGHILDPETGDEVDEVMVTVMRAPKTYTKEDIIEINCHGGIVATNRILQLCLSYGARLAEPGEYTKRAFLNGRIDLTQAESVMDLIRAKTDKSMKVALDQLDGDLSKLIRNLRQDILDALAQVEVNIDYPEYDDVETMTTKMLLEKAHEVKQQIKTLLATAKQGKVLREGLATAIVGRPNVGKSSLLNHLLHEDKAIVTDVAGTTRDVIEEYVNVKGVPLKLIDTAGIRDTTDKVEKIGVERSRKAINTADLVMLVLNASEPLTAEDEALLTATKDTQRILILNKTDLPLQLDLAAVRQVAGDSPIIETSILQSTGMDQLEETIAHLFFDEGIESSQNTVMVTNARHIGLLHQASAALDDVQNGIAAGMPVDLVQIDMTRAWDLLGEITGDSYQDELLDQLFSQFCLGK.

3 residues coordinate (6S)-5-formyl-5,6,7,8-tetrahydrofolate: Arg27, Glu89, and Arg128. The 160-residue stretch at 225 to 384 (GLATAIVGRP…LEETIAHLFF (160 aa)) folds into the TrmE-type G domain. Asn235 is a binding site for K(+). GTP is bound by residues 235–240 (NVGKSS), 254–260 (TDVAGTT), and 279–282 (DTAG). A Mg(2+)-binding site is contributed by Ser239. Residues Thr254, Val256, and Thr259 each contribute to the K(+) site. Position 260 (Thr260) interacts with Mg(2+). (6S)-5-formyl-5,6,7,8-tetrahydrofolate is bound at residue Lys464.

This sequence belongs to the TRAFAC class TrmE-Era-EngA-EngB-Septin-like GTPase superfamily. TrmE GTPase family. Homodimer. Heterotetramer of two MnmE and two MnmG subunits. K(+) is required as a cofactor.

The protein resides in the cytoplasm. Its function is as follows. Exhibits a very high intrinsic GTPase hydrolysis rate. Involved in the addition of a carboxymethylaminomethyl (cmnm) group at the wobble position (U34) of certain tRNAs, forming tRNA-cmnm(5)s(2)U34. The polypeptide is tRNA modification GTPase MnmE (Levilactobacillus brevis (strain ATCC 367 / BCRC 12310 / CIP 105137 / JCM 1170 / LMG 11437 / NCIMB 947 / NCTC 947) (Lactobacillus brevis)).